The primary structure comprises 107 residues: uncharacterized protein (107 aa).

The chain crosses the membrane as a helical span at residues 52–72 (LIIHDLFIYIFILNFFFFPFC).

The protein localises to the membrane. This is an uncharacterized protein from Saccharomyces cerevisiae (strain ATCC 204508 / S288c) (Baker's yeast).